Here is a 530-residue protein sequence, read N- to C-terminus: Chondroitin sulfate N-acetylgalactosaminyltransferase 1 (530 aa).

Residues 1 to 12 (MVRRGLLGWISR) are Cytoplasmic-facing. Residues 13–33 (VVILLVLLCCAISVLYMLACT) form a helical; Signal-anchor for type II membrane protein membrane-spanning segment. At 34–530 (PKGDQEQLGL…QKQKASSKKT (497 aa)) the chain is on the lumenal side. Residues 57–93 (AVLQEREEQHRNYVNSLKRQIAQLKDELQARSEQFRS) are a coiled coil. Residues 88 to 107 (SEQFRSGQDQASDATSLRSG) are disordered. A compositionally biased stretch (polar residues) spans 91–105 (FRSGQDQASDATSLR). N313 and N322 each carry an N-linked (GlcNAc...) asparagine glycan. Residues D358 and H475 each coordinate a divalent metal cation.

The protein belongs to the chondroitin N-acetylgalactosaminyltransferase family.

It localises to the golgi apparatus. Its subcellular location is the golgi stack membrane. It carries out the reaction 3-O-(beta-D-GlcA-(1-&gt;3)-beta-D-Gal-(1-&gt;3)-beta-D-Gal-(1-&gt;4)-beta-D-Xyl)-L-seryl-[protein] + UDP-N-acetyl-alpha-D-galactosamine = 3-O-(beta-D-GalNAc-(1-&gt;4)-beta-D-GlcA-(1-&gt;3)-beta-D-Gal-(1-&gt;3)-beta-D-Gal-(1-&gt;4)-beta-D-Xyl)-L-seryl-[protein] + UDP + H(+). Its function is as follows. Transfers 1,4-N-acetylgalactosamine (GalNAc) from UDP-GalNAc to the non-reducing end of glucuronic acid (GlcUA). Required for addition of the first GalNAc to the core tetrasaccharide linker and for elongation of chondroitin chains. Important role in chondroitin chain biosynthesis in cartilage formation, and subsequent endochondral ossification. Moreover, is involved in the metabolism of aggrecan. In Mus musculus (Mouse), this protein is Chondroitin sulfate N-acetylgalactosaminyltransferase 1.